Here is a 64-residue protein sequence, read N- to C-terminus: Large ribosomal subunit protein bL35 (64 aa).

This sequence belongs to the bacterial ribosomal protein bL35 family.

This is Large ribosomal subunit protein bL35 from Shewanella halifaxensis (strain HAW-EB4).